A 231-amino-acid chain; its full sequence is DNA mismatch repair protein MutH (231 aa).

This sequence belongs to the MutH family.

The protein localises to the cytoplasm. Functionally, sequence-specific endonuclease that cleaves unmethylated GATC sequences. It is involved in DNA mismatch repair. In Salmonella enteritidis PT4 (strain P125109), this protein is DNA mismatch repair protein MutH.